The sequence spans 338 residues: Formamidase (338 aa).

The CN hydrolase domain maps to 14–260 (LLIAAIQYPV…WEIVTAELFP (247 aa)). The active-site Proton acceptor is the Glu60. The active-site Proton donor is the Lys133. The active-site Nucleophile is Cys166.

Belongs to the carbon-nitrogen hydrolase superfamily. Aliphatic amidase family.

It carries out the reaction formamide + H2O = formate + NH4(+). Functionally, is an aliphatic amidase with a restricted substrate specificity, as it only hydrolyzes formamide. The sequence is that of Formamidase from Photorhabdus laumondii subsp. laumondii (strain DSM 15139 / CIP 105565 / TT01) (Photorhabdus luminescens subsp. laumondii).